Here is a 141-residue protein sequence, read N- to C-terminus: Large ribosomal subunit protein uL11 (141 aa).

The protein belongs to the universal ribosomal protein uL11 family. In terms of assembly, part of the ribosomal stalk of the 50S ribosomal subunit. Interacts with L10 and the large rRNA to form the base of the stalk. L10 forms an elongated spine to which L12 dimers bind in a sequential fashion forming a multimeric L10(L12)X complex. Post-translationally, one or more lysine residues are methylated.

Forms part of the ribosomal stalk which helps the ribosome interact with GTP-bound translation factors. The protein is Large ribosomal subunit protein uL11 of Geobacillus sp. (strain WCH70).